The primary structure comprises 246 residues: Octanoyltransferase (246 aa).

A BPL/LPL catalytic domain is found at 46-234 (GTAGEMVWLV…AFEEVFGAAE (189 aa)). Residues 85–92 (RGGEYTYH), 165–167 (AIG), and 178–180 (GIA) contribute to the substrate site. C196 (acyl-thioester intermediate) is an active-site residue.

It belongs to the LipB family.

The protein localises to the cytoplasm. The enzyme catalyses octanoyl-[ACP] + L-lysyl-[protein] = N(6)-octanoyl-L-lysyl-[protein] + holo-[ACP] + H(+). It participates in protein modification; protein lipoylation via endogenous pathway; protein N(6)-(lipoyl)lysine from octanoyl-[acyl-carrier-protein]: step 1/2. Its function is as follows. Catalyzes the transfer of endogenously produced octanoic acid from octanoyl-acyl-carrier-protein onto the lipoyl domains of lipoate-dependent enzymes. Lipoyl-ACP can also act as a substrate although octanoyl-ACP is likely to be the physiological substrate. The polypeptide is Octanoyltransferase (Chelativorans sp. (strain BNC1)).